A 479-amino-acid polypeptide reads, in one-letter code: Probable periplasmic serine endoprotease DegP-like (479 aa).

Positions 1–27 (MSMPSLKKYAAALFAVFLMGQSVAAHA) are cleaved as a signal peptide. Active-site charge relay system residues include histidine 118, aspartate 148, and serine 221. Substrate-binding positions include 219-221 (GNS) and 276-280 (LGVVI). 2 PDZ domains span residues 265-356 (LKAS…VREG) and 362-468 (KVAV…LRQG). Positions 368–390 (MPADDGDEATNDAAPSAERSSNR) are disordered.

It belongs to the peptidase S1C family.

The protein resides in the periplasm. The catalysed reaction is Acts on substrates that are at least partially unfolded. The cleavage site P1 residue is normally between a pair of hydrophobic residues, such as Val-|-Val.. In terms of biological role, might be efficient in the degradation of transiently denatured and unfolded proteins which accumulate in the periplasm following stress conditions. This Pseudomonas fulva (strain 12-X) protein is Probable periplasmic serine endoprotease DegP-like.